Consider the following 453-residue polypeptide: uncharacterized protein (453 aa).

This sequence to yeast RIT1.

This is an uncharacterized protein from Schizosaccharomyces pombe (strain 972 / ATCC 24843) (Fission yeast).